The following is a 279-amino-acid chain: Undecaprenyl-diphosphatase (279 aa).

A run of 8 helical transmembrane segments spans residues 2–22 (LFIELLKAIFFGVIEGVTEWL), 44–64 (AFMEMFNIVIQLGAIIAVIVI), 85–105 (WQLWLKVAIACIPSIIIAVPL), 113–133 (FNHMLPIAIALIVYGIAFLWI), 163–183 (VLSIIPGTSRSGATILGAIIL), 188–208 (TVAADFTFFLAIPTMFGYSGL), 225–245 (LLVLLVASLTAFAVSLYVIKL), and 255–275 (FTVFGRYRIVLGSLLIVYSVF).

It belongs to the UppP family.

The protein localises to the cell membrane. The catalysed reaction is di-trans,octa-cis-undecaprenyl diphosphate + H2O = di-trans,octa-cis-undecaprenyl phosphate + phosphate + H(+). Catalyzes the dephosphorylation of undecaprenyl diphosphate (UPP). Confers resistance to bacitracin. In Streptococcus equi subsp. equi (strain 4047), this protein is Undecaprenyl-diphosphatase.